The following is a 90-amino-acid chain: uncharacterized protein (90 aa).

Residues 46-62 traverse the membrane as a helical segment; it reads MALLVVFLVSLFACTTI.

Its subcellular location is the membrane. This is an uncharacterized protein from Haemophilus influenzae (strain ATCC 51907 / DSM 11121 / KW20 / Rd).